A 749-amino-acid chain; its full sequence is Meiotically up-regulated gene 122 protein (749 aa).

Over 1–20 (MYRKWDLCITRHLLPYIEHS) the chain is Cytoplasmic. A helical; Signal-anchor for type II membrane protein transmembrane segment spans residues 21 to 41 (VIPIIALLVLSLIFYILYICF). The Lumenal segment spans residues 42–749 (GTTSYILSGI…LLSNALRSII (708 aa)). A PXA domain is found at 88–261 (PPELEAPLQL…CIILYFSSSE (174 aa)). Residues 311-422 (LHYQFLKEAS…KFFAKSMRSH (112 aa)) form the PX domain. 2 disordered regions span residues 439–489 (QSSS…LSQQ) and 504–546 (GSCT…PPKP). 2 stretches are compositionally biased toward polar residues: residues 440–461 (SSSV…NKTS) and 475–489 (LSHQ…LSQQ).

This sequence belongs to the sorting nexin family.

The protein resides in the endoplasmic reticulum membrane. In terms of biological role, has a role in meiosis. The sequence is that of Meiotically up-regulated gene 122 protein (mug122) from Schizosaccharomyces pombe (strain 972 / ATCC 24843) (Fission yeast).